The following is a 440-amino-acid chain: MSEFSQTVPELVAWARKNDFSISLQVDRLSFLLAVATLNGERLDGEMSEGELVDAFRHVSDAFEQTSETIGVRANNAINDMVRQRLLNRFTSEQAEGNAIYRLTPLGIGITDYYIRQREFSTLRLSMQLSIVAGELKRAADAAEEGGDEFHWHRNVYAPLKYSVAEIFDSIDLTQRLMDEQQQQVKDDIAQLLNKDWRAAISSCELLLSETSGTLRELQDTLEAAGDKLQANLLRIQDATMTHDDLHFVDRLVFDLQSKLDRIISWGQQSIDLWIGYDRHVHKFIRTAIDMDKNRVFAQRLRQSVQTYFDEPWALTYANADRLLDMRDEEMALRDEEVTGELPEDLEYEEFNEIREQLAAIIEEQLAVYKTRQVPLDLGLVVREYLSQYPRARHFDVARIVIDQAVRLGVAQADFTGLPAKWQPINDYGAKVQAHVIDKY.

The tract at residues 208-236 is leucine-zipper; it reads LSETSGTLRELQDTLEAAGDKLQANLLRI.

It belongs to the MukF family. Interacts, and probably forms a ternary complex, with MukE and MukB via its C-terminal region. The complex formation is stimulated by calcium or magnesium. It is required for an interaction between MukE and MukB.

It localises to the cytoplasm. The protein localises to the nucleoid. Its function is as follows. Involved in chromosome condensation, segregation and cell cycle progression. May participate in facilitating chromosome segregation by condensation DNA from both sides of a centrally located replisome during cell division. Not required for mini-F plasmid partitioning. Probably acts via its interaction with MukB and MukE. Overexpression results in anucleate cells. It has a calcium binding activity. The sequence is that of Chromosome partition protein MukF from Shigella boydii serotype 4 (strain Sb227).